Reading from the N-terminus, the 269-residue chain is Hydroxyethylthiazole kinase (269 aa).

A substrate-binding site is contributed by Met-45. Residues Arg-121 and Thr-167 each coordinate ATP. Substrate is bound at residue Gly-194.

This sequence belongs to the Thz kinase family. Requires Mg(2+) as cofactor.

It carries out the reaction 5-(2-hydroxyethyl)-4-methylthiazole + ATP = 4-methyl-5-(2-phosphooxyethyl)-thiazole + ADP + H(+). It participates in cofactor biosynthesis; thiamine diphosphate biosynthesis; 4-methyl-5-(2-phosphoethyl)-thiazole from 5-(2-hydroxyethyl)-4-methylthiazole: step 1/1. Catalyzes the phosphorylation of the hydroxyl group of 4-methyl-5-beta-hydroxyethylthiazole (THZ). The chain is Hydroxyethylthiazole kinase from Bacillus cereus (strain ATCC 14579 / DSM 31 / CCUG 7414 / JCM 2152 / NBRC 15305 / NCIMB 9373 / NCTC 2599 / NRRL B-3711).